The following is a 29-amino-acid chain: Potassium channel toxin alpha-KTx 3.15 (29 aa).

C8 and C27 are oxidised to a cystine.

This sequence belongs to the short scorpion toxin superfamily. Potassium channel inhibitor family. Alpha-KTx 03 subfamily. As to expression, expressed by the venom gland.

The protein resides in the secreted. Its function is as follows. May play a role in blocking voltage-gated potassium channels Kv1.1/KCNA1, Kv1.3/KCNA3 and Kv1.6/KCNA6. This Mesobuthus gibbosus (Mediterranean checkered scorpion) protein is Potassium channel toxin alpha-KTx 3.15.